The sequence spans 320 residues: UPF0053 protein in cps region (320 aa).

The chain crosses the membrane as a helical span at residues 4–24; it reads CLSFLLMIGFSLIAEGFSFII. CBS domains follow at residues 121–183 and 186–244; these read MTSR…PLDL and LVRQ…PNEV.

It belongs to the UPF0053 family.

It is found in the cell membrane. The sequence is that of UPF0053 protein in cps region from Klebsiella pneumoniae.